A 159-amino-acid chain; its full sequence is Phosphopantetheine adenylyltransferase (159 aa).

A substrate-binding site is contributed by T10. ATP is bound by residues 10 to 11 (TF) and H18. Positions 42, 74, and 88 each coordinate substrate. ATP contacts are provided by residues 89–91 (GLR), E99, and 124–130 (YSFISSS).

It belongs to the bacterial CoaD family. As to quaternary structure, homohexamer. Requires Mg(2+) as cofactor.

Its subcellular location is the cytoplasm. It catalyses the reaction (R)-4'-phosphopantetheine + ATP + H(+) = 3'-dephospho-CoA + diphosphate. It participates in cofactor biosynthesis; coenzyme A biosynthesis; CoA from (R)-pantothenate: step 4/5. Its function is as follows. Reversibly transfers an adenylyl group from ATP to 4'-phosphopantetheine, yielding dephospho-CoA (dPCoA) and pyrophosphate. This Campylobacter hominis (strain ATCC BAA-381 / DSM 21671 / CCUG 45161 / LMG 19568 / NCTC 13146 / CH001A) protein is Phosphopantetheine adenylyltransferase.